The sequence spans 119 residues: uncharacterized protein (119 aa).

Cysteine 9 and cysteine 12 are joined by a disulfide.

This sequence belongs to the ArsC family.

This is an uncharacterized protein from Streptomyces viridochromogenes.